The following is a 393-amino-acid chain: F-box protein KIB4 (393 aa).

The 48-residue stretch at 12–59 (AKQPILVLDLVRLVLERLSFVDFHRARCVSSVWYSASKSCIGGTNPTA) folds into the F-box domain.

Its subcellular location is the cytoplasm. The protein resides in the nucleus. It localises to the nucleolus. Its function is as follows. Component of SCF(ASK-cullin-F-box) E3 ubiquitin ligase complexes, which may mediate the ubiquitination and subsequent proteasomal degradation of target proteins. Required for brassinosteroid (BR) signal transduction. Mediates ASK7/BIN2/SK21 inactivation both by competing with substrate binding (e.g. BZR1) and by promoting its ubiquitination and subsequent proteasomal degradation. The polypeptide is F-box protein KIB4 (Arabidopsis thaliana (Mouse-ear cress)).